Reading from the N-terminus, the 204-residue chain is Guanylate kinase (204 aa).

Residues 3-181 (GTLIIITAPS…ALDDLVAVVR (179 aa)) enclose the Guanylate kinase-like domain. 10-17 (APSGAGKT) is a binding site for ATP.

The protein belongs to the guanylate kinase family.

It localises to the cytoplasm. It catalyses the reaction GMP + ATP = GDP + ADP. In terms of biological role, essential for recycling GMP and indirectly, cGMP. This Aromatoleum aromaticum (strain DSM 19018 / LMG 30748 / EbN1) (Azoarcus sp. (strain EbN1)) protein is Guanylate kinase.